We begin with the raw amino-acid sequence, 185 residues long: Elongation factor P (185 aa).

This sequence belongs to the elongation factor P family.

The protein localises to the cytoplasm. The protein operates within protein biosynthesis; polypeptide chain elongation. Functionally, involved in peptide bond synthesis. Stimulates efficient translation and peptide-bond synthesis on native or reconstituted 70S ribosomes in vitro. Probably functions indirectly by altering the affinity of the ribosome for aminoacyl-tRNA, thus increasing their reactivity as acceptors for peptidyl transferase. The protein is Elongation factor P of Burkholderia mallei (strain NCTC 10247).